The chain runs to 183 residues: Putative manganese efflux pump MntP (183 aa).

6 helical membrane-spanning segments follow: residues 8–28 (IIAL…VALG), 40–60 (FYIG…GMAV), 72–92 (ATYA…IASF), 108–128 (LFFA…LGIF), 133–153 (MVTI…GLFV), and 163–183 (SYSE…LLFL).

This sequence belongs to the MntP (TC 9.B.29) family.

The protein resides in the cell membrane. Functionally, probably functions as a manganese efflux pump. The sequence is that of Putative manganese efflux pump MntP from Geobacillus kaustophilus (strain HTA426).